Here is a 100-residue protein sequence, read N- to C-terminus: MELTPREKDKLLIFTAALLAERRRARGLKLNYPETVALITAALMEGARDGKTVAELMSEGTRILGRDEIMEGVPEMISNIQVEVTFPDGTKLITVHNPVV.

Belongs to the urease gamma subunit family. In terms of assembly, heterotrimer of UreA (gamma), UreB (beta) and UreC (alpha) subunits. Three heterotrimers associate to form the active enzyme.

It is found in the cytoplasm. The enzyme catalyses urea + 2 H2O + H(+) = hydrogencarbonate + 2 NH4(+). It participates in nitrogen metabolism; urea degradation; CO(2) and NH(3) from urea (urease route): step 1/1. This Bordetella pertussis (strain Tohama I / ATCC BAA-589 / NCTC 13251) protein is Urease subunit gamma.